Reading from the N-terminus, the 85-residue chain is Small ribosomal subunit protein uS17 (85 aa).

Belongs to the universal ribosomal protein uS17 family. In terms of assembly, part of the 30S ribosomal subunit.

In terms of biological role, one of the primary rRNA binding proteins, it binds specifically to the 5'-end of 16S ribosomal RNA. This is Small ribosomal subunit protein uS17 from Anaeromyxobacter dehalogenans (strain 2CP-1 / ATCC BAA-258).